Reading from the N-terminus, the 251-residue chain is Triosephosphate isomerase, glycosomal (251 aa).

Positions 12 and 14 each coordinate substrate. Histidine 96 (electrophile) is an active-site residue. Glutamate 168 serves as the catalytic Proton acceptor.

The protein belongs to the triosephosphate isomerase family. Homodimer.

It localises to the glycosome. The enzyme catalyses D-glyceraldehyde 3-phosphate = dihydroxyacetone phosphate. The protein operates within carbohydrate biosynthesis; gluconeogenesis. It participates in carbohydrate degradation; glycolysis; D-glyceraldehyde 3-phosphate from glycerone phosphate: step 1/1. This chain is Triosephosphate isomerase, glycosomal, found in Trypanosoma cruzi.